A 481-amino-acid chain; its full sequence is Adenosylhomocysteinase (481 aa).

3 residues coordinate substrate: threonine 65, aspartate 140, and glutamate 200. Position 201 to 203 (201 to 203 (TTT)) interacts with NAD(+). The substrate site is built by lysine 230 and aspartate 234. NAD(+)-binding positions include asparagine 235, 264–269 (GYGDVG), glutamate 287, asparagine 322, 343–345 (IGH), and asparagine 393.

This sequence belongs to the adenosylhomocysteinase family. The cofactor is NAD(+).

It localises to the cytoplasm. The catalysed reaction is S-adenosyl-L-homocysteine + H2O = L-homocysteine + adenosine. It functions in the pathway amino-acid biosynthesis; L-homocysteine biosynthesis; L-homocysteine from S-adenosyl-L-homocysteine: step 1/1. In terms of biological role, may play a key role in the regulation of the intracellular concentration of adenosylhomocysteine. This Polynucleobacter asymbioticus (strain DSM 18221 / CIP 109841 / QLW-P1DMWA-1) (Polynucleobacter necessarius subsp. asymbioticus) protein is Adenosylhomocysteinase.